The sequence spans 366 residues: Tyrosyl-DNA phosphodiesterase 2 (366 aa).

The residue at position 1 (Met-1) is an N-acetylmethionine. Positions 1-22 are enriched in low complexity; the sequence is MASGSSSDAAESAEPAAAPAAA. Positions 1 to 30 are disordered; that stretch reads MASGSSSDAAESAEPAAAPAAAETEEDQVK. Residue Lys-30 forms a Glycyl lysine isopeptide (Lys-Gly) (interchain with G-Cter in SUMO2) linkage. Position 95 is a phosphothreonine; by ACVR1B (Thr-95). The tract at residues 126-130 is interaction with 5' end of substrate DNA; the sequence is NIDGL. Residues Asp-128 and Glu-158 each contribute to the Mg(2+) site. The interaction with 5' end of substrate DNA stretch occupies residues 232 to 237; the sequence is HLESTR. Catalysis depends on Asp-268, which acts as the Proton donor/acceptor. The segment at 270 to 272 is interaction with 5' end of substrate DNA; that stretch reads NLR.

Belongs to the CCR4/nocturin family. Interacts with TRAF2, TRAF3, TRAF5, TRAF6, TNFRSF8/CD30, TNFRSF5/CD40, TNFRSF1B/TNF-R75, ETS1, ETS2, FLI1, SMAD3 and ACVR1B/ALK4. The cofactor is Mg(2+). Mn(2+) is required as a cofactor. In terms of processing, ubiquitinated by TRAF6.

Its subcellular location is the nucleus. It localises to the PML body. The protein localises to the nucleolus. The protein resides in the cytoplasm. Functionally, DNA repair enzyme that can remove a variety of covalent adducts from DNA through hydrolysis of a 5'-phosphodiester bond, giving rise to DNA with a free 5' phosphate. Catalyzes the hydrolysis of dead-end complexes between DNA and the topoisomerase 2 (TOP2) active site tyrosine residue. The 5'-tyrosyl DNA phosphodiesterase activity can enable the repair of TOP2-induced DNA double-strand breaks/DSBs without the need for nuclease activity, creating a 'clean' DSB with 5'-phosphate termini that are ready for ligation. Thereby, protects the transcription of many genes involved in neurological development and maintenance from the abortive activity of TOP2. Hydrolyzes 5'-phosphoglycolates on protruding 5' ends on DSBs due to DNA damage by radiation and free radicals. Has preference for single-stranded DNA or duplex DNA with a 4 base pair overhang as substrate. Also has 3'-tyrosyl DNA phosphodiesterase activity, but less efficiently and much slower than TDP1. Constitutes the major if not only 5'-tyrosyl-DNA phosphodiesterase in cells. Also acts as an adapter by participating in the specific activation of MAP3K7/TAK1 in response to TGF-beta: associates with components of the TGF-beta receptor-TRAF6-TAK1 signaling module and promotes their ubiquitination dependent complex formation. Involved in non-canonical TGF-beta induced signaling routes. May also act as a negative regulator of ETS1 and may inhibit NF-kappa-B activation. Acts as a regulator of ribosome biogenesis following stress. This Rattus norvegicus (Rat) protein is Tyrosyl-DNA phosphodiesterase 2 (Tdp2).